The chain runs to 59 residues: Large ribosomal subunit protein uL30 (59 aa).

The protein belongs to the universal ribosomal protein uL30 family. As to quaternary structure, part of the 50S ribosomal subunit.

This is Large ribosomal subunit protein uL30 from Streptococcus agalactiae serotype Ia (strain ATCC 27591 / A909 / CDC SS700).